We begin with the raw amino-acid sequence, 153 residues long: Large ribosomal subunit protein bL9 (153 aa).

The protein belongs to the bacterial ribosomal protein bL9 family.

In terms of biological role, binds to the 23S rRNA. The protein is Large ribosomal subunit protein bL9 of Gloeobacter violaceus (strain ATCC 29082 / PCC 7421).